Here is an 880-residue protein sequence, read N- to C-terminus: Phosphoinositide 3-kinase regulatory subunit 5 (880 aa).

At methionine 1 the chain carries N-acetylmethionine. The segment at 25 to 101 (SLSRRSTSWS…TPHFPPDSDL (77 aa)) is heterodimerization. Disordered regions lie at residues 315-339 (GILGDDEEEEEEEEEVEEDLETDGH), 389-416 (SGYVEDSEESSSEWPWRRGSQERRGHRR), 454-510 (RRAG…SGDE), and 565-601 (HGTSPGACPPPRSQTPSPPTDSPRHASPGELGTTPWE). Over residues 318–335 (GDDEEEEEEEEEVEEDLE) the composition is skewed to acidic residues. Residues serine 458 and serine 507 each carry the phosphoserine modification. Over residues 571–585 (ACPPPRSQTPSPPTD) the composition is skewed to pro residues. Residues 653–753 (PILADMLLYY…WSNLEKVCTS (101 aa)) form an interaction with beta-gamma G protein dimers region.

In terms of assembly, heterodimer of a catalytic subunit (PIK3CG/p120) and a regulatory (PIK3R5a/p101) subunit. Interacts with beta-gamma G protein dimers. As to expression, ubiquitously expressed with high expression in fetal brain compared to adult brain. Abundant expression is observed in cerebellum, cerebral cortex, cerebral meninges, and vermis cerebelli.

Its subcellular location is the nucleus. It localises to the cytoplasm. It is found in the cell membrane. With respect to regulation, greatly activated by G gamma proteins. Regulatory subunit of the PI3K gamma complex. Required for recruitment of the catalytic subunit to the plasma membrane via interaction with beta-gamma G protein dimers. Required for G protein-mediated activation of PIK3CG. This Homo sapiens (Human) protein is Phosphoinositide 3-kinase regulatory subunit 5 (PIK3R5).